The sequence spans 360 residues: Inward rectifier potassium channel 13 (360 aa).

The Cytoplasmic segment spans residues 1–50; it reads MESSNCKVITPLLSQRHRRMVTKDGHSTLQTDGAPRGLVYLRDAWGTLID. Residues 51–77 traverse the membrane as a helical segment; it reads MRWRWVMLVFSASFVLHWLVFAVLWYV. The Extracellular portion of the chain corresponds to 78–105; the sequence is LAEMNGDLELDHDAPPENHTICVKYITS. Positions 106 to 122 form an intramembrane region, helical; Pore-forming; it reads FTAAFSFSLETQLTIGY. The short motif at 119-124 is the Selectivity filter element; that stretch reads TIGYGT. Residues 123–131 lie on the Extracellular side of the membrane; that stretch reads GTMFPSGDC. Residues 132-157 form a helical membrane-spanning segment; sequence PSAIALLAIQMLLGLMLEAFITGAFV. Residues 158 to 360 lie on the Cytoplasmic side of the membrane; that stretch reads AKIARPKNRA…FQISETGLTE (203 aa). Phosphoserine; by PKC is present on S201. S287 is modified (phosphoserine; by PKA).

The protein belongs to the inward rectifier-type potassium channel (TC 1.A.2.1) family. KCNJ13 subfamily. Homotetramer. In terms of processing, phosphorylation at Ser-201 by PKC strongly inhibits ionic currents, while phosphorylation at Ser-287 by PKA increases them.

The protein localises to the membrane. It localises to the cell membrane. It catalyses the reaction K(+)(in) = K(+)(out). Its activity is regulated as follows. Inhibited by Ba(2+) and Cs(+), although sensitivity to those inhibitors is much lower than in other Kir channels. Inward rectifier potassium channels are characterized by a greater tendency to allow potassium to flow into the cell rather than out of it. Their voltage dependence is regulated by the concentration of extracellular potassium; as external potassium is raised, the voltage range of the channel opening shifts to more positive voltages. The inward rectification is mainly due to the blockage of outward current by internal magnesium. KCNJ13 has a very low single channel conductance, low sensitivity to block by external barium and cesium, and no dependence of its inward rectification properties on the internal blocking particle magnesium. This Cavia porcellus (Guinea pig) protein is Inward rectifier potassium channel 13 (KCNJ13).